Consider the following 1299-residue polypeptide: Outer capsid protein VP1 (1299 aa).

This sequence belongs to the aquareoviridae outer capsid VP1 protein family.

Its subcellular location is the virion. The enzyme catalyses a 5'-end diphospho-ribonucleoside in mRNA + GTP + H(+) = a 5'-end (5'-triphosphoguanosine)-ribonucleoside in mRNA + diphosphate. It carries out the reaction a 5'-end (5'-triphosphoguanosine)-ribonucleoside in mRNA + S-adenosyl-L-methionine = a 5'-end (N(7)-methyl 5'-triphosphoguanosine)-ribonucleoside in mRNA + S-adenosyl-L-homocysteine. Functionally, outer capsid protein involved in mRNA capping. Catalyzes the last 3 enzymatic activities for formation of the 5' cap structure on the viral plus-strand transcripts, namely the RNA guanylyltransferase, RNA-7N- and RNA-2'O-methyltransferase activities. In Aquareovirus C (isolate Golden shiner/USA/GSRV/1977) (AQRV-C), this protein is Outer capsid protein VP1 (S1).